The primary structure comprises 486 residues: UDP-N-acetylmuramate--L-alanine ligase (486 aa).

126-132 (GTHGKTS) is a binding site for ATP.

It belongs to the MurCDEF family.

The protein localises to the cytoplasm. It carries out the reaction UDP-N-acetyl-alpha-D-muramate + L-alanine + ATP = UDP-N-acetyl-alpha-D-muramoyl-L-alanine + ADP + phosphate + H(+). It participates in cell wall biogenesis; peptidoglycan biosynthesis. Functionally, cell wall formation. This chain is UDP-N-acetylmuramate--L-alanine ligase, found in Corynebacterium glutamicum (strain ATCC 13032 / DSM 20300 / JCM 1318 / BCRC 11384 / CCUG 27702 / LMG 3730 / NBRC 12168 / NCIMB 10025 / NRRL B-2784 / 534).